A 268-amino-acid chain; its full sequence is 3-deoxy-manno-octulosonate cytidylyltransferase (268 aa).

The protein belongs to the KdsB family.

It is found in the cytoplasm. It carries out the reaction 3-deoxy-alpha-D-manno-oct-2-ulosonate + CTP = CMP-3-deoxy-beta-D-manno-octulosonate + diphosphate. It functions in the pathway nucleotide-sugar biosynthesis; CMP-3-deoxy-D-manno-octulosonate biosynthesis; CMP-3-deoxy-D-manno-octulosonate from 3-deoxy-D-manno-octulosonate and CTP: step 1/1. The protein operates within bacterial outer membrane biogenesis; lipopolysaccharide biosynthesis. Its function is as follows. Activates KDO (a required 8-carbon sugar) for incorporation into bacterial lipopolysaccharide in Gram-negative bacteria. In Ralstonia nicotianae (strain ATCC BAA-1114 / GMI1000) (Ralstonia solanacearum), this protein is 3-deoxy-manno-octulosonate cytidylyltransferase.